Here is a 221-residue protein sequence, read N- to C-terminus: Thyrotroph embryonic factor (221 aa).

A disordered region spans residues 72–116 (ESASSSTASPPSSSTAVFQPSETVSSTESSLEKERETPSPIDPNC). The segment covering 73 to 100 (SASSSTASPPSSSTAVFQPSETVSSTES) has biased composition (low complexity). One can recognise a bZIP domain in the interval 173-221 (DEKYWTRRKKNNVAAKRSRDARRLKENQITIRAAFLEKENTALRTEVAD). The interval 175 to 195 (KYWTRRKKNNVAAKRSRDARR) is basic motif. The interval 196 to 203 (LKENQITI) is leucine-zipper.

This sequence belongs to the bZIP family. PAR subfamily. As to quaternary structure, binds DNA as a homodimer or a heterodimer. Can form a heterodimer with DBP.

Its subcellular location is the nucleus. Its function is as follows. Transcription factor that binds to and transactivates the TSHB promoter. Binds to a minimal DNA-binding sequence 5'-[TC][AG][AG]TTA[TC][AG]-3'. The protein is Thyrotroph embryonic factor (TEF) of Phodopus sungorus (Striped hairy-footed hamster).